We begin with the raw amino-acid sequence, 71 residues long: Exodeoxyribonuclease 7 small subunit (71 aa).

It belongs to the XseB family. As to quaternary structure, heterooligomer composed of large and small subunits.

Its subcellular location is the cytoplasm. The enzyme catalyses Exonucleolytic cleavage in either 5'- to 3'- or 3'- to 5'-direction to yield nucleoside 5'-phosphates.. Bidirectionally degrades single-stranded DNA into large acid-insoluble oligonucleotides, which are then degraded further into small acid-soluble oligonucleotides. The chain is Exodeoxyribonuclease 7 small subunit from Streptococcus pyogenes serotype M1.